Consider the following 2532-residue polypeptide: Lovastatin diketide synthase lovF (2532 aa).

The 421-residue stretch at 10–430 folds into the Ketosynthase family 3 (KS3) domain; that stretch reads PAPIAMVGMG…GANAHAIVEQ (421 aa). Residues cysteine 183, histidine 318, and histidine 353 each act as for beta-ketoacyl synthase activity in the active site. A malonyl-CoA:ACP transacylase (MAT) domain region spans residues 545 to 870; that stretch reads VFTGQGAQWF…PYLSCLSRGK (326 aa). The active-site For malonyltransferase activity is serine 635. The tract at residues 941 to 1078 is N-terminal hotdog fold; sequence HDLIGLQEPL…GLVRAEMDQP (138 aa). Positions 941-1246 are dehydratase (DH) domain; that stretch reads HDLIGLQEPL…LEGLVFQSLG (306 aa). The PKS/mFAS DH domain maps to 941 to 1251; it reads HDLIGLQEPL…FQSLGASLGT (311 aa). The active-site Proton acceptor; for dehydratase activity is the histidine 973. A disordered region spans residues 1075–1094; the sequence is MDQPPSSLSNQQRIDPRPWS. The segment covering 1078–1087 has biased composition (polar residues); it reads PPSSLSNQQR. Residues 1092–1251 are C-terminal hotdog fold; sequence PWSRKTAPQE…FQSLGASLGT (160 aa). Aspartate 1159 acts as the Proton donor; for dehydratase activity in catalysis. A methyltransferase (CMet) domain region spans residues 1423–1607; the sequence is ELVRLCCHKN…ARDCDSHEFY (185 aa). Residues 1825–2144 are enoylreductase (ER) domain; sequence GLLDSLHFTK…SGQHVGKIVV (320 aa). The tract at residues 2168-2340 is ketoreductase (KR) domain; that stretch reads SYLVAGGLGG…AVTIDLGMVQ (173 aa). Positions 2453–2530 constitute a Carrier domain; the sequence is ESIAVIMEAM…KVAEVVLQRY (78 aa). The residue at position 2490 (serine 2490) is an O-(pantetheine 4'-phosphoryl)serine.

As to quaternary structure, interacts with LovD. Pantetheine 4'-phosphate serves as cofactor.

It catalyses the reaction holo-[2-methylbutanoate polyketide synthase] + 2 malonyl-CoA + S-adenosyl-L-methionine + 2 NADPH + 3 H(+) = (S)-2-methylbutanoyl-[2-methylbutanoate polyketide synthase] + S-adenosyl-L-homocysteine + 2 CO2 + 2 NADP(+) + 2 CoA + H2O. Its pathway is polyketide biosynthesis; lovastatin biosynthesis. In terms of biological role, lovastatin diketide synthase; part of the gene cluster that mediates the biosynthesis of lovastatin (also known as mevinolin, mevacor or monacolin K), a hypolipidemic inhibitor of (3S)-hydroxymethylglutaryl-coenzyme A (HMG-CoA) reductase (HMGR). The first step in the biosynthesis of lovastatin is the production of dihydromonacolin L acid by the lovastatin nonaketide synthase lovB and the trans-acting enoyl reductase lovC via condensation of one acetyl-CoA unit and 8 malonyl-CoA units. Dihydromonacolin L acid is released from lovB by the thioesterase lovG. Next, dihydromonacolin L acid is oxidized by the dihydromonacolin L monooxygenase lovA twice to form monacolin J acid. The 2-methylbutyrate moiety of lovastatin is synthesized by the lovastatin diketide synthase lovF via condensation of one acetyl-CoA unit and one malonyl-CoA unit. Finally, the covalent attachment of this moiety to monacolin J acid is catalyzed by the transesterase lovD to yield lovastatin. LovD has broad substrate specificity and can also convert monacolin J to simvastatin using alpha-dimethylbutanoyl-S-methyl-3-mercaptopropionate (DMB-S-MMP) as the thioester acyl donor, and can also catalyze the reverse reaction and function as hydrolase in vitro. LovD has much higher activity with LovF-bound 2-methylbutanoate than with free diketide substrates. This Aspergillus terreus protein is Lovastatin diketide synthase lovF.